Here is a 365-residue protein sequence, read N- to C-terminus: Cobalt-precorrin-5B C(1)-methyltransferase (365 aa).

Belongs to the CbiD family.

It carries out the reaction Co-precorrin-5B + S-adenosyl-L-methionine = Co-precorrin-6A + S-adenosyl-L-homocysteine. The protein operates within cofactor biosynthesis; adenosylcobalamin biosynthesis; cob(II)yrinate a,c-diamide from sirohydrochlorin (anaerobic route): step 6/10. Functionally, catalyzes the methylation of C-1 in cobalt-precorrin-5B to form cobalt-precorrin-6A. In Geobacillus sp. (strain WCH70), this protein is Cobalt-precorrin-5B C(1)-methyltransferase.